Reading from the N-terminus, the 234-residue chain is Sugar fermentation stimulation protein A (234 aa).

Residues 201 to 220 (LLSEAQQRGVEILAYKAELS) constitute a DNA-binding region (H-T-H motif).

Belongs to the SfsA family.

Binds to DNA non-specifically. Could be a regulatory factor involved in maltose metabolism. This is Sugar fermentation stimulation protein A from Escherichia coli O7:K1 (strain IAI39 / ExPEC).